The following is a 206-amino-acid chain: Small ribosomal subunit protein uS4 (206 aa).

The region spanning 96–158 is the S4 RNA-binding domain; the sequence is GRLDNVVYRM…AKQQSRIKAA (63 aa).

This sequence belongs to the universal ribosomal protein uS4 family. In terms of assembly, part of the 30S ribosomal subunit. Contacts protein S5. The interaction surface between S4 and S5 is involved in control of translational fidelity.

Its function is as follows. One of the primary rRNA binding proteins, it binds directly to 16S rRNA where it nucleates assembly of the body of the 30S subunit. In terms of biological role, with S5 and S12 plays an important role in translational accuracy. The polypeptide is Small ribosomal subunit protein uS4 (Vibrio atlanticus (strain LGP32) (Vibrio splendidus (strain Mel32))).